Here is a 95-residue protein sequence, read N- to C-terminus: Integration host factor subunit beta (95 aa).

The protein belongs to the bacterial histone-like protein family. Heterodimer of an alpha and a beta chain.

This protein is one of the two subunits of integration host factor, a specific DNA-binding protein that functions in genetic recombination as well as in transcriptional and translational control. The protein is Integration host factor subunit beta of Klebsiella pneumoniae (strain 342).